A 157-amino-acid polypeptide reads, in one-letter code: Endoribonuclease YbeY (157 aa).

Zn(2+) contacts are provided by His114, His118, and His124.

It belongs to the endoribonuclease YbeY family. The cofactor is Zn(2+).

It is found in the cytoplasm. Single strand-specific metallo-endoribonuclease involved in late-stage 70S ribosome quality control and in maturation of the 3' terminus of the 16S rRNA. This Salmonella dublin (strain CT_02021853) protein is Endoribonuclease YbeY.